The primary structure comprises 74 residues: Protein kish-B (74 aa).

A signal peptide spans 1 to 22; sequence MTNVYSLDGLLVFALLFVCTCA. Residues 23–52 lie on the Extracellular side of the membrane; the sequence is YFRKVPRLRSWLLSEKKGVWGVFYKAAVIG. The helical transmembrane segment at 53-73 threads the bilayer; sequence SRLHLAVSISCIAMAFYVLFI. Residue lysine 74 is a topological domain, cytoplasmic.

The protein belongs to the KISH family.

Its subcellular location is the golgi apparatus membrane. Involved in the early part of the secretory pathway. This chain is Protein kish-B (tmem167b), found in Xenopus laevis (African clawed frog).